The following is a 350-amino-acid chain: TATA box-binding protein-like 2 (350 aa).

The disordered stretch occupies residues 82-150 (ENRDQTVTGN…QPSPETPNSN (69 aa)). The span at 94-116 (ASEESCRTRDRQSQLQLPDEHGS) shows a compositional bias: basic and acidic residues. Polar residues-rich tracts occupy residues 118–128 (LNLNSNSSPDP) and 139–150 (SNQPSPETPNSN).

Belongs to the TBP family. Interacts with TAF3. In terms of tissue distribution, expressed in myotubes and myofibers (at protein level). Expressed in a wide variety of tissues with highest levels in heart, lung, liver, uterus and placenta and especially the gonads. Expression is higher in the ovary than the testis, and within the ovary expression is localized to the oocytes.

Its subcellular location is the cytoplasm. The protein resides in the nucleus. In terms of biological role, transcription factor required in complex with TAF3 for the differentiation of myoblasts into myocytes. The complex replaces TFIID at specific promoters at an early stage in the differentiation process. This Mus musculus (Mouse) protein is TATA box-binding protein-like 2.